We begin with the raw amino-acid sequence, 368 residues long: Protein-glutamate methylesterase/protein-glutamine glutaminase 1 (368 aa).

The Response regulatory domain occupies 4 to 121; the sequence is KVLVVDDSGF…SRNPDKVRQL (118 aa). A 4-aspartylphosphate modification is found at Asp-55. The disordered stretch occupies residues 138-176; sequence SLPPLPSATSSSHAPASSSSVGASARVGAGASPAPASTS. The span at 144-176 shows a compositional bias: low complexity; that stretch reads SATSSSHAPASSSSVGASARVGAGASPAPASTS. The region spanning 172–368 is the CheB-type methylesterase domain; the sequence is PASTSAAPKR…IGRHLVEACQ (197 aa). Active-site residues include Ser-192, His-219, and Asp-312.

It belongs to the CheB family. Post-translationally, phosphorylated by CheA. Phosphorylation of the N-terminal regulatory domain activates the methylesterase activity.

It is found in the cytoplasm. It catalyses the reaction [protein]-L-glutamate 5-O-methyl ester + H2O = L-glutamyl-[protein] + methanol + H(+). It carries out the reaction L-glutaminyl-[protein] + H2O = L-glutamyl-[protein] + NH4(+). Its function is as follows. Involved in chemotaxis. Part of a chemotaxis signal transduction system that modulates chemotaxis in response to various stimuli. Catalyzes the demethylation of specific methylglutamate residues introduced into the chemoreceptors (methyl-accepting chemotaxis proteins or MCP) by CheR. Also mediates the irreversible deamidation of specific glutamine residues to glutamic acid. This Pseudomonas aeruginosa (strain ATCC 15692 / DSM 22644 / CIP 104116 / JCM 14847 / LMG 12228 / 1C / PRS 101 / PAO1) protein is Protein-glutamate methylesterase/protein-glutamine glutaminase 1.